The primary structure comprises 771 residues: Ribonucleoside-diphosphate reductase large subunit (771 aa).

The ATP-cone domain maps to Met1–Lys92. ATP contacts are provided by residues Lys5–Arg6, Glu11–Lys17, Thr53, Asp57, and Lys88. Positions 202 and 217 each coordinate GDP. Residues Asp226–Ile228, Lys243, and Arg256 each bind dTTP. Asn427 contacts GDP. Residue Asn427 is the Proton acceptor of the active site. Cys429 serves as the catalytic Cysteine radical intermediate. Residues Glu431 and Thr603–Thr606 contribute to the GDP site. The active-site Proton acceptor is Glu431.

It belongs to the ribonucleoside diphosphate reductase large chain family. As to quaternary structure, interacts with RNR2/OPG047 subunit. The cofactor is Mg(2+).

It catalyses the reaction a 2'-deoxyribonucleoside 5'-diphosphate + [thioredoxin]-disulfide + H2O = a ribonucleoside 5'-diphosphate + [thioredoxin]-dithiol. In terms of biological role, ribonucleoside-diphosphate reductase holoenzyme provides the precursors necessary for viral DNA synthesis. Allows virus growth in non-dividing cells. Catalyzes the biosynthesis of deoxyribonucleotides from the corresponding ribonucleotides. The polypeptide is Ribonucleoside-diphosphate reductase large subunit (OPG080) (Homo sapiens (Human)).